The chain runs to 197 residues: Elongation factor Ts (197 aa).

The segment at 81 to 84 (TDFV) is involved in Mg(2+) ion dislocation from EF-Tu.

The protein belongs to the EF-Ts family.

Its subcellular location is the cytoplasm. Its function is as follows. Associates with the EF-Tu.GDP complex and induces the exchange of GDP to GTP. It remains bound to the aminoacyl-tRNA.EF-Tu.GTP complex up to the GTP hydrolysis stage on the ribosome. This chain is Elongation factor Ts, found in Thermotoga neapolitana (strain ATCC 49049 / DSM 4359 / NBRC 107923 / NS-E).